The following is a 166-amino-acid chain: Sec-independent protein translocase protein TatB (166 aa).

A helical transmembrane segment spans residues 2 to 22 (FDGIGFMELLLIGVLGLVVLG). A disordered region spans residues 69-166 (SKGLSNLSPE…DTRSNPKANG (98 aa)). Composition is skewed to polar residues over residues 88-97 (QAAQSVNRPY) and 112-132 (QIHS…SQAN). The span at 133-153 (PTATVEASPTSASPATPSEPS) shows a compositional bias: low complexity. Over residues 155–166 (GADTRSNPKANG) the composition is skewed to polar residues.

It belongs to the TatB family. As to quaternary structure, the Tat system comprises two distinct complexes: a TatABC complex, containing multiple copies of TatA, TatB and TatC subunits, and a separate TatA complex, containing only TatA subunits. Substrates initially bind to the TatABC complex, which probably triggers association of the separate TatA complex to form the active translocon.

It is found in the cell inner membrane. In terms of biological role, part of the twin-arginine translocation (Tat) system that transports large folded proteins containing a characteristic twin-arginine motif in their signal peptide across membranes. Together with TatC, TatB is part of a receptor directly interacting with Tat signal peptides. TatB may form an oligomeric binding site that transiently accommodates folded Tat precursor proteins before their translocation. The protein is Sec-independent protein translocase protein TatB of Shewanella baltica (strain OS223).